The primary structure comprises 286 residues: Bifunctional protein FolD (286 aa).

Residues 160-162, Ser-189, and Thr-230 each bind NADP(+); that span reads GRS.

It belongs to the tetrahydrofolate dehydrogenase/cyclohydrolase family. As to quaternary structure, homodimer.

The catalysed reaction is (6R)-5,10-methylene-5,6,7,8-tetrahydrofolate + NADP(+) = (6R)-5,10-methenyltetrahydrofolate + NADPH. It carries out the reaction (6R)-5,10-methenyltetrahydrofolate + H2O = (6R)-10-formyltetrahydrofolate + H(+). It functions in the pathway one-carbon metabolism; tetrahydrofolate interconversion. Its function is as follows. Catalyzes the oxidation of 5,10-methylenetetrahydrofolate to 5,10-methenyltetrahydrofolate and then the hydrolysis of 5,10-methenyltetrahydrofolate to 10-formyltetrahydrofolate. The sequence is that of Bifunctional protein FolD from Chlamydia pneumoniae (Chlamydophila pneumoniae).